The chain runs to 332 residues: Anthranilate phosphoribosyltransferase (332 aa).

5-phospho-alpha-D-ribose 1-diphosphate contacts are provided by residues Gly79, 82-83 (GD), Thr87, 89-92 (NIST), 107-115 (KHGNRSVSS), and Ser119. Gly79 lines the anthranilate pocket. Ser91 contacts Mg(2+). Residue Asn110 participates in anthranilate binding. Position 165 (Arg165) interacts with anthranilate. Mg(2+) contacts are provided by Asp223 and Glu224.

Belongs to the anthranilate phosphoribosyltransferase family. As to quaternary structure, homodimer. Mg(2+) serves as cofactor.

The enzyme catalyses N-(5-phospho-beta-D-ribosyl)anthranilate + diphosphate = 5-phospho-alpha-D-ribose 1-diphosphate + anthranilate. Its pathway is amino-acid biosynthesis; L-tryptophan biosynthesis; L-tryptophan from chorismate: step 2/5. Its function is as follows. Catalyzes the transfer of the phosphoribosyl group of 5-phosphorylribose-1-pyrophosphate (PRPP) to anthranilate to yield N-(5'-phosphoribosyl)-anthranilate (PRA). This Vibrio vulnificus (strain CMCP6) protein is Anthranilate phosphoribosyltransferase.